We begin with the raw amino-acid sequence, 152 residues long: Deoxyuridine 5'-triphosphate nucleotidohydrolase (152 aa).

Substrate contacts are provided by residues 70-72 (RSG), Asn83, 87-89 (TID), and Lys97.

The protein belongs to the dUTPase family. The cofactor is Mg(2+).

It carries out the reaction dUTP + H2O = dUMP + diphosphate + H(+). Its pathway is pyrimidine metabolism; dUMP biosynthesis; dUMP from dCTP (dUTP route): step 2/2. Functionally, this enzyme is involved in nucleotide metabolism: it produces dUMP, the immediate precursor of thymidine nucleotides and it decreases the intracellular concentration of dUTP so that uracil cannot be incorporated into DNA. The polypeptide is Deoxyuridine 5'-triphosphate nucleotidohydrolase (Corynebacterium diphtheriae (strain ATCC 700971 / NCTC 13129 / Biotype gravis)).